Reading from the N-terminus, the 155-residue chain is Phytohormone-binding protein CSBP (155 aa).

Trans-zeatin contacts are provided by residues leucine 22, glutamine 67, glutamate 69, and 139–142; that span reads TLMY. Glutamine 67 contributes to the gibberellin A3 binding site. Threonine 139 provides a ligand contact to gibberellin A3.

This sequence belongs to the BetVI family. As to quaternary structure, monomer.

Its function is as follows. Binds the cytokinin trans-zeatin in vitro. Binds gibberellin A3 (GA3) in vitro. This chain is Phytohormone-binding protein CSBP, found in Vigna radiata var. radiata (Mung bean).